The primary structure comprises 600 residues: MEPRAGCRLPVRVEQVVNGALVVTVSCGERSFAGILLDCTKKSGLFGLSPSTLLPLADNSSAVSCHGQAPEEGTGEVMQLETGPLHPHHKDPEKDQPPKTAVSEPPPPLIPPVPAGNLPPFPPYFEGAPFPHPLWLRNTYQQWVPQPPPRTIKRTRRRLSRNRDPGRLILSTIRLRPRQVLCEKCKSTVSPQEASPSPLNTPKPRRRLGSGPDSEHRKPEEPEDSAVIATAAPRRSKREKREEDRVAGERVPRSPVIKISYSTPQGKGEVVKIPSRVHGSVEPFCPQQSLQNGSQDSEVSRDVEPRGGGDRPPSGSSASIPKLKLTRPVPPISDLPPPKIRLKPHRLGDGEHEPLYRAELVEELNGCPRGPLVSSPALFADGSSHGLEDLSSGSSGEDDDLKRFPQGKHGRDGLAFLVDCPGRRTDCTSESVCSTDSLDELKSSGSEVTSPDTGDLSSGDSASVPSSSADTRQTVPPLTVRLHTQSVSRCVTEDGRTVAVGDIVWGKIHGFPWWPARVLDISLGQKEDGEPSWQEAKVSWFGSPTTSFLSISKLSPFSEFFKLRFNRKKKGMYRKAITEAANATQHVAPEIRELLTQFEM.

Disordered regions lie at residues 81–115, 143–171, 186–350, 366–408, and 426–477; these read ETGP…PVPA, WVPQ…LILS, KSTV…LGDG, GCPR…PQGK, and DCTS…TVPP. The segment covering 104–115 has biased composition (pro residues); the sequence is EPPPPLIPPVPA. A compositionally biased stretch (basic residues) spans 151 to 160; that stretch reads TIKRTRRRLS. The segment covering 187 to 200 has biased composition (polar residues); sequence STVSPQEASPSPLN. 2 positions are modified to phosphoserine: serine 190 and serine 210. Basic and acidic residues predominate over residues 239 to 252; it reads EKREEDRVAGERVP. Residue serine 254 is modified to Phosphoserine. Residues 286-297 are compositionally biased toward polar residues; the sequence is PQQSLQNGSQDS. Residues 298–309 show a composition bias toward basic and acidic residues; that stretch reads EVSRDVEPRGGG. Positions 328–339 are enriched in pro residues; it reads PVPPISDLPPPK. Residues 381–395 show a composition bias toward low complexity; sequence DGSSHGLEDLSSGSS. A compositionally biased stretch (polar residues) spans 443 to 456; sequence SSGSEVTSPDTGDL. Residue serine 457 is modified to Phosphoserine. The segment covering 457 to 468 has biased composition (low complexity); it reads SSGDSASVPSSS. The region spanning 500–560 is the PWWP domain; sequence VGDIVWGKIH…ISKLSPFSEF (61 aa).

In terms of assembly, component of a MTA1-specific subcomplex of the NuRD complex composed of PWWP2B, MTA1 and HDAC1 but does not contain CHD4 and MBD3. Interacts with MTA1, MTA2, MTA3, HDAC1, HDAC2, RBBP4, RBBP7, BRCC3 and ZNF516. Does not interact with CHD4 and MBD3. Deubiquitinated by BRCC3; leading to its stabilization. Expressed in the brown adipose tissue.

Its subcellular location is the nucleus. Its function is as follows. Chromatin-binding protein that acts as an adapter between distinct nucleosome components (H3K36me3 or H2A.Z) and chromatin-modifying complexes, contributing to the regulation of the levels of histone acetylation at actively transcribed genes. Competes with CHD4 and MBD3 for interaction with MTA1 to form a NuRD subcomplex, preventing the formation of full NuRD complex (containing CHD4 and MBD3), leading to recruitment of HDACs to gene promoters resulting in turn in the deacetylation of nearby H3K27 and H2A.Z. Plays a role in facilitating transcriptional elongation through regulation of histone acetylation. Negatively regulates brown adipocyte thermogenesis by interacting with and stabilizing HDAC1 at the UCP1 gene promoter, thereby promoting histone deacetylation at the promoter leading to the repression of UCP1 expression. The chain is PWWP domain-containing protein 2B (Pwwp2b) from Mus musculus (Mouse).